The primary structure comprises 361 residues: uncharacterized protein (361 aa).

An N-terminal signal peptide occupies residues 1-17 (MNLFIYVLLLSIWTSSC). Over 18–47 (LDRNESNGSATAVTTHAEFKQTKLQELRRR) the chain is Extracellular. The N-linked (GlcNAc...) asparagine glycan is linked to asparagine 24. Residues 48–68 (LLIIVIGTLITGYMVSCTCLL) form a helical membrane-spanning segment. At 69-361 (HYSCDSEEAH…EDIYKNSRNN (293 aa)) the chain is on the cytoplasmic side. The segment covering 95-106 (SSKISFTDSKSP) has biased composition (polar residues). Positions 95–197 (SSKISFTDSK…SQVSPSYPEK (103 aa)) are disordered. Residues 144–158 (PSSQKKPSKPSAPKK) are compositionally biased toward low complexity. Positions 169–185 (HRTRSPKKAHRQAHAHK) are enriched in basic residues.

It is found in the membrane. This is an uncharacterized protein from Bos taurus (Bovine).